The following is a 529-amino-acid chain: MQQRRPVRRALLSVSDKAGIVEFAQALSARGVELLSTGGTARLLAEKGLPVTEVSDYTGFPEMMDGRVKTLHPKVHGGILGRRGQDDAIMEEHLIQPIDMVVVNLYPFAQTVAREGCSLEDAVENIDIGGPTMVRSAAKNHKDVAIVVKSSDYDAIIKEMDDNEGSLTLATRFDLAIKAFEHTAAYDSMIANYFGSMVPAYHGESKEADGRFPRTLNLNFIKKQDMRYGENSHQQAAFYIEENVKEASVATATQVQGKALSYNNIADTDAALECVKEFAEPACVIVKHANPCGVAIGNSILDAYDRAYKTDPTSAFGGIIAFNRELDAETAQAIISRQFVEVIIAPSASEEALKITAAKQNVRVLTCGQWGERVPGLDFKRVNGGLLVQDRDLGMVGAEELRVVTQRQPTEQELRDALFCWKVAKFVKSNAIVYAKNNMTIGIGAGQMSRVYSAKIAGIKAADEGLEVKGSSMASDAFFPFRDGIDAAAAAGVTCVIQPGGSIRDDEVIAAADEHGIAMLFTDMRHFRH.

Residues 1–148 (MQQRRPVRRA…KNHKDVAIVV (148 aa)) form the MGS-like domain. At Lys-287 the chain carries N6-acetyllysine.

The protein belongs to the PurH family.

The catalysed reaction is (6R)-10-formyltetrahydrofolate + 5-amino-1-(5-phospho-beta-D-ribosyl)imidazole-4-carboxamide = 5-formamido-1-(5-phospho-D-ribosyl)imidazole-4-carboxamide + (6S)-5,6,7,8-tetrahydrofolate. The enzyme catalyses IMP + H2O = 5-formamido-1-(5-phospho-D-ribosyl)imidazole-4-carboxamide. It functions in the pathway purine metabolism; IMP biosynthesis via de novo pathway; 5-formamido-1-(5-phospho-D-ribosyl)imidazole-4-carboxamide from 5-amino-1-(5-phospho-D-ribosyl)imidazole-4-carboxamide (10-formyl THF route): step 1/1. The protein operates within purine metabolism; IMP biosynthesis via de novo pathway; IMP from 5-formamido-1-(5-phospho-D-ribosyl)imidazole-4-carboxamide: step 1/1. The chain is Bifunctional purine biosynthesis protein PurH from Shigella dysenteriae serotype 1 (strain Sd197).